Here is a 157-residue protein sequence, read N- to C-terminus: Prefoldin subunit alpha (157 aa).

This sequence belongs to the prefoldin subunit alpha family. As to quaternary structure, heterohexamer of two alpha and four beta subunits.

Its subcellular location is the cytoplasm. Its function is as follows. Molecular chaperone capable of stabilizing a range of proteins. Seems to fulfill an ATP-independent, HSP70-like function in archaeal de novo protein folding. This Methanopyrus kandleri (strain AV19 / DSM 6324 / JCM 9639 / NBRC 100938) protein is Prefoldin subunit alpha.